The chain runs to 119 residues: UPF0292 protein TV1259 (119 aa).

The 83-residue stretch at 11–93 folds into the Toprim domain; the sequence is SIPIIVEGRN…YVDLYLWNFI (83 aa). Residues glutamate 17, aspartate 62, and aspartate 64 each contribute to the Mg(2+) site.

The protein belongs to the UPF0292 family. Mg(2+) serves as cofactor.

This chain is UPF0292 protein TV1259, found in Thermoplasma volcanium (strain ATCC 51530 / DSM 4299 / JCM 9571 / NBRC 15438 / GSS1).